Consider the following 302-residue polypeptide: Glutaminase (302 aa).

Substrate is bound by residues Ser61, Asn111, Glu155, Asn162, Tyr186, Tyr238, and Val256.

Belongs to the glutaminase family. Homotetramer.

It carries out the reaction L-glutamine + H2O = L-glutamate + NH4(+). This Ectopseudomonas mendocina (strain ymp) (Pseudomonas mendocina) protein is Glutaminase.